The primary structure comprises 545 residues: Chaperonin GroEL (545 aa).

ATP contacts are provided by residues 29-32 (TLGP), K50, 86-90 (DGTTT), G415, and D495.

It belongs to the chaperonin (HSP60) family. As to quaternary structure, forms a cylinder of 14 subunits composed of two heptameric rings stacked back-to-back. Interacts with the co-chaperonin GroES.

The protein resides in the cytoplasm. It catalyses the reaction ATP + H2O + a folded polypeptide = ADP + phosphate + an unfolded polypeptide.. In terms of biological role, together with its co-chaperonin GroES, plays an essential role in assisting protein folding. The GroEL-GroES system forms a nano-cage that allows encapsulation of the non-native substrate proteins and provides a physical environment optimized to promote and accelerate protein folding. The chain is Chaperonin GroEL from Phocaeicola vulgatus (strain ATCC 8482 / DSM 1447 / JCM 5826 / CCUG 4940 / NBRC 14291 / NCTC 11154) (Bacteroides vulgatus).